Reading from the N-terminus, the 335-residue chain is Large ribosomal subunit protein uL3 (335 aa).

3 disordered regions span residues 1-35, 234-256, and 312-335; these read MPQP…ADDG, IGNL…GQTG, and AVRP…SNQG. Residues 244–256 show a composition bias toward polar residues; that stretch reads RVRSTVPQQGQTG.

This sequence belongs to the universal ribosomal protein uL3 family. Part of the 50S ribosomal subunit. Forms a cluster with proteins L14 and L24e.

Its function is as follows. One of the primary rRNA binding proteins, it binds directly near the 3'-end of the 23S rRNA, where it nucleates assembly of the 50S subunit. The chain is Large ribosomal subunit protein uL3 from Halobacterium salinarum (strain ATCC 29341 / DSM 671 / R1).